A 667-amino-acid chain; its full sequence is DNA ligase (667 aa).

Residues 34 to 38 (DAEYD), 83 to 84 (SL), and E113 each bind NAD(+). K115 (N6-AMP-lysine intermediate) is an active-site residue. Residues R136, E170, K286, and K310 each contribute to the NAD(+) site. Residues C404, C407, C422, and C427 each coordinate Zn(2+). In terms of domain architecture, BRCT spans 589-667 (ATDSVLSGKT…EQQLEDVVGK (79 aa)).

The protein belongs to the NAD-dependent DNA ligase family. LigA subfamily. Requires Mg(2+) as cofactor. It depends on Mn(2+) as a cofactor.

It catalyses the reaction NAD(+) + (deoxyribonucleotide)n-3'-hydroxyl + 5'-phospho-(deoxyribonucleotide)m = (deoxyribonucleotide)n+m + AMP + beta-nicotinamide D-nucleotide.. DNA ligase that catalyzes the formation of phosphodiester linkages between 5'-phosphoryl and 3'-hydroxyl groups in double-stranded DNA using NAD as a coenzyme and as the energy source for the reaction. It is essential for DNA replication and repair of damaged DNA. In Oceanobacillus iheyensis (strain DSM 14371 / CIP 107618 / JCM 11309 / KCTC 3954 / HTE831), this protein is DNA ligase.